We begin with the raw amino-acid sequence, 938 residues long: MSDYKKTLNLPQTAFPMKANLAQREPEAIKKWEAANACAAMVEASGSEGTYILHDGPPYANGHLHMGHALNKILKDIIVKSRNMAGYASWYVPGWDCHGLPIEHKVEQDLKEKKKSLPAHVVRKLCREYANKWLDVQRKEFKRLGVLGDWDHPYISMDPAYEAVTAGELAKFVAAGGVARAKKPIYWCCSCHTALAEAEVEYNDHTSPSVYVRFALPDEGLKKVFAAADPARAHVVIWTTTPWTLPDNMAVCLHPEFTYALVEAEGSQYILAEELVASCAETFGWSEYTILDRATGERLEGLKARHPFYDRQSSLVLGLHVTLDAGTGCVHTAPGHGREDYDVALKYGLEIYSPMDDAGRFLPAVEFFAGLNVFEANPKVVEKLEEVGALLQKGKIRHSYPHCWRCKEPVIFRATTQWFISMEKNDLRTRALKAIDEEVRWIPAWGRERIHNMVEFRPDWCISRQRQWGVPILALLCEDCGEAWNDPAWMQEIAARFAKHPTGCDYWYEAELKDVVPEGLACPHCGGNHWKRETDILDVWFDSGTSFAAVLEKRPELGFPADLYLEGSDQHRGWFHSSLLVSEGTRGCAPYRAVLTHGYVVDGDGRKMSKSVGNVIAPQELIEKFGAEIVRLWVSSVEYREDIRLSDEILGRLVDAYRRIRNTCRFIMGNLSDITAHDLLSLDRLQPLDRFALDVAGRVHERVQQAYMDFDFHKVYHTLHNYCVTDLSSVYLDILKDRLYASAPHSDERRSAQTALWHILCLLLRDMAPVLSFTAEEIFSHLPESLRGPETTVFALPPLAAAPYLLDEGTRDDWNVLLAVRGAVTKAIEPMRREGIIGHSLDTRITLFVADELRQRLEGLHTDLRAVCIVSQLHLEALDRAPQAAYRDEEVAGLAIGVEKARGEKCERCWIYSTELGSDASHPALCPRCTAVIKGMES.

The 'HIGH' region motif lies at Pro-58–His-68. Residue Glu-566 coordinates L-isoleucyl-5'-AMP. Residues Lys-607 to Ser-611 carry the 'KMSKS' region motif. Lys-610 is an ATP binding site. Positions 906, 909, 926, and 929 each coordinate Zn(2+).

The protein belongs to the class-I aminoacyl-tRNA synthetase family. IleS type 1 subfamily. In terms of assembly, monomer. The cofactor is Zn(2+).

The protein localises to the cytoplasm. It carries out the reaction tRNA(Ile) + L-isoleucine + ATP = L-isoleucyl-tRNA(Ile) + AMP + diphosphate. Its function is as follows. Catalyzes the attachment of isoleucine to tRNA(Ile). As IleRS can inadvertently accommodate and process structurally similar amino acids such as valine, to avoid such errors it has two additional distinct tRNA(Ile)-dependent editing activities. One activity is designated as 'pretransfer' editing and involves the hydrolysis of activated Val-AMP. The other activity is designated 'posttransfer' editing and involves deacylation of mischarged Val-tRNA(Ile). The chain is Isoleucine--tRNA ligase from Desulfovibrio desulfuricans (strain ATCC 27774 / DSM 6949 / MB).